Reading from the N-terminus, the 87-residue chain is Large ribosomal subunit protein bL27 (87 aa).

The protein belongs to the bacterial ribosomal protein bL27 family.

In Dichelobacter nodosus (strain VCS1703A), this protein is Large ribosomal subunit protein bL27.